The primary structure comprises 198 residues: Probable GTP-binding protein EngB (198 aa).

An EngB-type G domain is found at Asn-22–Leu-196. GTP contacts are provided by residues Gly-30–Ser-37, Gly-57–Thr-61, Asp-75–Gly-78, Thr-142–Asp-145, and Phe-175–Ala-177. Residues Ser-37 and Thr-59 each contribute to the Mg(2+) site.

This sequence belongs to the TRAFAC class TrmE-Era-EngA-EngB-Septin-like GTPase superfamily. EngB GTPase family. Mg(2+) is required as a cofactor.

Necessary for normal cell division and for the maintenance of normal septation. The chain is Probable GTP-binding protein EngB from Oenococcus oeni (strain ATCC BAA-331 / PSU-1).